The sequence spans 351 residues: Inactive RHOMBOID-like protein 8 (351 aa).

The next 7 membrane-spanning stretches (helical) occupy residues 48–68 (TWLV…TMGV), 130–150 (WLHS…FVGI), 160–180 (RIAV…VLFV), 183–203 (IPSI…LSAL), 216–236 (ALAI…LPFI), 239–259 (FANI…LFKP), and 294–314 (IICL…ACWG).

This sequence belongs to the peptidase S54 family. As to expression, expressed in pollen mother cell.

The protein resides in the golgi apparatus membrane. Functionally, probable inactive rhomboid-type serine protease. In terms of biological role, probably essential for the meiosis stage-specific callose accumulation and pollen exine formation. This chain is Inactive RHOMBOID-like protein 8, found in Arabidopsis thaliana (Mouse-ear cress).